We begin with the raw amino-acid sequence, 320 residues long: Pseudouridine-5'-phosphate glycosidase (320 aa).

Glutamate 25 functions as the Proton donor in the catalytic mechanism. Substrate-binding residues include lysine 85 and valine 105. Aspartate 137 contacts Mn(2+). 139–141 is a substrate binding site; it reads SAD. Residue lysine 158 is the Nucleophile of the active site.

This sequence belongs to the pseudouridine-5'-phosphate glycosidase family. Homotrimer. Mn(2+) serves as cofactor.

It catalyses the reaction D-ribose 5-phosphate + uracil = psi-UMP + H2O. In terms of biological role, catalyzes the reversible cleavage of pseudouridine 5'-phosphate (PsiMP) to ribose 5-phosphate and uracil. Functions biologically in the cleavage direction, as part of a pseudouridine degradation pathway. The protein is Pseudouridine-5'-phosphate glycosidase of Rhodospirillum centenum (strain ATCC 51521 / SW).